The following is a 419-amino-acid chain: E3 ubiquitin-protein ligase pellino homolog 2 (419 aa).

Residues 15-202 (EPVKYRELVV…HPQGGFTEES (188 aa)) form the FHA; atypical domain.

Belongs to the pellino family. In terms of assembly, interacts with TRAF6, IRAK4 and MAP3K7. Interacts with IRAK1. Interacts with BCL10; this interaction is impaired by SOCS3. Phosphorylated by IRAK1 and IRAK4 enhancing its E3 ligase activity. Widely expressed both in embryos and adult. Weakly or not expressed in spleen and thymus.

The catalysed reaction is S-ubiquitinyl-[E2 ubiquitin-conjugating enzyme]-L-cysteine + [acceptor protein]-L-lysine = [E2 ubiquitin-conjugating enzyme]-L-cysteine + N(6)-ubiquitinyl-[acceptor protein]-L-lysine.. It functions in the pathway protein modification; protein ubiquitination. Its function is as follows. E3 ubiquitin ligase catalyzing the covalent attachment of ubiquitin moieties onto substrate proteins. Involved in the TLR and IL-1 signaling pathways via interaction with the complex containing IRAK kinases and TRAF6. Mediates IL1B-induced IRAK1 'Lys-63'-linked polyubiquitination and possibly 'Lys-48'-linked ubiquitination. May be important for LPS- and IL1B-induced MAP3K7-dependent, but not MAP3K3-dependent, NF-kappa-B activation. Can activate the MAP (mitogen activated protein) kinase pathway leading to activation of ELK1. This chain is E3 ubiquitin-protein ligase pellino homolog 2 (Peli2), found in Mus musculus (Mouse).